The sequence spans 386 residues: Succinate--CoA ligase [ADP-forming] subunit beta (386 aa).

The ATP-grasp domain maps to 9–235 (KELFAKHDVP…REEEDPLESA (227 aa)). Residues Lys-44, 51-53 (GRG), Ala-93, and Glu-98 each bind ATP. Mg(2+) is bound by residues Asn-190 and Asp-204. Residues Asn-255 and 317-319 (GIT) contribute to the substrate site.

It belongs to the succinate/malate CoA ligase beta subunit family. Heterotetramer of two alpha and two beta subunits. Mg(2+) serves as cofactor.

The enzyme catalyses succinate + ATP + CoA = succinyl-CoA + ADP + phosphate. The catalysed reaction is GTP + succinate + CoA = succinyl-CoA + GDP + phosphate. It participates in carbohydrate metabolism; tricarboxylic acid cycle; succinate from succinyl-CoA (ligase route): step 1/1. In terms of biological role, succinyl-CoA synthetase functions in the citric acid cycle (TCA), coupling the hydrolysis of succinyl-CoA to the synthesis of either ATP or GTP and thus represents the only step of substrate-level phosphorylation in the TCA. The beta subunit provides nucleotide specificity of the enzyme and binds the substrate succinate, while the binding sites for coenzyme A and phosphate are found in the alpha subunit. The polypeptide is Succinate--CoA ligase [ADP-forming] subunit beta (Nocardioides sp. (strain ATCC BAA-499 / JS614)).